An 863-amino-acid chain; its full sequence is MENIFSKDSDIELVDIENSIKSSYLDYSMSVIIGRALPDARDGLKPVHRRILYAMQNDEAKSRTDFVKSARIVGAVIGRYHPHGDTAVYDALVRMAQDFSMRYPSITGQGNFGSIDGDSAAAMRYTEAKMSKLSHELLKDIDKDTVDFVPNYDGSESEPDVLPSRVPNLLLNGSSGIAVGMATNIPPHSLNELIDGLLYLLDNKDASLEEIMQFIKGPDFPTGGIIYGKKGIIEAYRTGRGRVKVRAKTHIEKKTNKDVIVIDELPYQTNKARLIEQIAELVKERQIEGISEVRDESNKEGIRVVIELKREAMSEIVLNNLFKSTTMESTFGVIMLAIHNKEPKIFSLLELLNLFLTHRKTVIIRRTIFELQKARARAHILEGLKIALDNIDEVIALIKNSSDNNTARDSLVAKFGLSELQANAILDMKLGRLTGLEREKIENELAELMKEIARLEEILKSETLLENLIRDELKEIRSKFDVPRITQIEDDYDDIDIEDLIPNENMVVTITHRGYIKRVPSKQYEKQKRGGKGKLAVTTYDDDFIESFFTANTHDTLMFVTDRGQLYWLKVYKIPEGSRTAKGKAVVNLINLQAEEKIMAIIPTTDFDESKSLCFFTKNGIVKRTNLSEYQNIRSVGVRAINLDENDELVTAIIVQRDEDEIFATGGEENLENQEIENLDDENLENEESVSTQGKMLFAVTKKGMCIKFPLAKVREIGRVSRGVTAIKFKEKNDELVGAVVIENDEQEILSISAKGIGKRTNAGEYRLQSRGGKGVICMKLTEKTKDLISVVIVDETMDLMALTSSGKMIRVDMQSIRKAGRNTSGVIVVNVENDEVVSIAKCPKEENDEDELSDENFGLDLQ.

The 464-residue stretch at 37 to 500 (LPDARDGLKP…DYDDIDIEDL (464 aa)) folds into the Topo IIA-type catalytic domain. Tyrosine 125 serves as the catalytic O-(5'-phospho-DNA)-tyrosine intermediate. The GyrA-box motif lies at 527-533 (QKRGGKG).

This sequence belongs to the type II topoisomerase GyrA/ParC subunit family. In terms of assembly, heterotetramer, composed of two GyrA and two GyrB chains. In the heterotetramer, GyrA contains the active site tyrosine that forms a transient covalent intermediate with DNA, while GyrB binds cofactors and catalyzes ATP hydrolysis.

It localises to the cytoplasm. It catalyses the reaction ATP-dependent breakage, passage and rejoining of double-stranded DNA.. In terms of biological role, a type II topoisomerase that negatively supercoils closed circular double-stranded (ds) DNA in an ATP-dependent manner to modulate DNA topology and maintain chromosomes in an underwound state. Negative supercoiling favors strand separation, and DNA replication, transcription, recombination and repair, all of which involve strand separation. Also able to catalyze the interconversion of other topological isomers of dsDNA rings, including catenanes and knotted rings. Type II topoisomerases break and join 2 DNA strands simultaneously in an ATP-dependent manner. This Campylobacter jejuni subsp. jejuni serotype O:2 (strain ATCC 700819 / NCTC 11168) protein is DNA gyrase subunit A.